We begin with the raw amino-acid sequence, 233 residues long: Phosphoglycolate phosphatase 2 (233 aa).

The Nucleophile role is filled by Asp13. Mg(2+)-binding residues include Asp13 and Asp15. Residue Lys152 participates in substrate binding. Asp174 and Asp178 together coordinate Mg(2+).

It belongs to the archaeal SPP-like hydrolase family. Requires Mg(2+) as cofactor.

The catalysed reaction is 2-phosphoglycolate + H2O = glycolate + phosphate. Functionally, catalyzes the dephosphorylation of 2-phosphoglycolate. The protein is Phosphoglycolate phosphatase 2 of Saccharolobus solfataricus (strain ATCC 35092 / DSM 1617 / JCM 11322 / P2) (Sulfolobus solfataricus).